The chain runs to 266 residues: Integral membrane protein 2B (266 aa).

Topologically, residues 1 to 54 (MVKVTFNSALAQKEAKKDEPKSSEEALIVPPDAVAVDCKDPGDVVPVGQRRAWC) are cytoplasmic. Residues 55–75 (WCMCFGLAFMLAGVILGGAYL) traverse the membrane as a helical; Signal-anchor for type II membrane protein segment. Over 76-266 (YKYFALQPDD…KFAVETLICS (191 aa)) the chain is Lumenal. A necessary for interaction with APP and inhibitor effects on APP processing region spans residues 102–134 (EPSADAPAARYQTIEENIKIFEEDAVEFISVPV). The BRICHOS domain occupies 137-231 (FADSDPANIV…LCHDKETYKL (95 aa)). 2 cysteine pairs are disulfide-bonded: cysteine 164/cysteine 223 and cysteine 248/cysteine 265. Asparagine 170 carries an N-linked (GlcNAc...) asparagine glycan.

Belongs to the ITM2 family. As to quaternary structure, homodimer; disulfide-linked. Interacts with SPPL2A and SPPL2B. Interacts with APP. Mature BRI2 (mBRI2) interacts with the APP amyloid-beta A4 protein; the interaction occurs at the cell surface and in the endocytic compartments and enable alpha- and beta-secretase-induced APP cleavage inhibition. Mature BRI2 (mBRI2) interacts with the APP C99; the interaction occurs in the endocytic compartments and enable gamma-secretase-induced C99 cleavage inhibition. May form heterodimers with Bri23 peptide and APP amyloid-beta protein 40. Interacts with ADAM7 in sperm; the interaction increases following capacitation. In terms of processing, the ectodomain C-terminal part of the imBRI2 is processed by furin producing a secreted Bri23 peptide and a mature BRI2, membrane form (mBRI2). The remaining part of the ectodomain of mBRI2 containing the BRICHOS domain is cleaved by ADAM10 and is secreted (BRI2C, soluble form). The membrane-bound N-terminal fragment (BRI2C, membrane form) is further proteolytically processed by SPPL2A and SPPL2B through regulated intramembrane proteolysis producing a secreted C-peptide and a BRI2 intracellular domain (BRI2 ICD) released in the cytosol. Shedding by ADAM10 facilitates intramembrane cleavage but is not absolutely required for BRI2 ICD generation. Glycosylation at Asn-170 is important for cell surface localization, but doesn't affect furin- and ADAM10-induced proteolytic processing. As to expression, expressed in the brain, testis, testicular sperm, epididymis and mature epididymal sperm (at protein level).

It is found in the golgi apparatus membrane. The protein resides in the cell membrane. It localises to the endosome membrane. The protein localises to the secreted. In terms of biological role, plays a regulatory role in the processing of the amyloid-beta A4 precursor protein (APP) and acts as an inhibitor of the amyloid-beta peptide aggregation and fibrils deposition. Plays a role in the induction of neurite outgrowth. Functions as a protease inhibitor by blocking access of secretases to APP cleavage sites. Functionally, mature BRI2 (mBRI2) functions as a modulator of the amyloid-beta A4 precursor protein (APP) processing leading to a strong reduction in the secretion of secretase-processed amyloid-beta protein 40 and amyloid-beta protein 42. Its function is as follows. Bri23 peptide prevents aggregation of APP amyloid-beta protein 42 into toxic oligomers. This is Integral membrane protein 2B (Itm2b) from Mus musculus (Mouse).